Consider the following 286-residue polypeptide: NAD kinase (286 aa).

Catalysis depends on Asp-74, which acts as the Proton acceptor. Residues Asp-74–Gly-75, Asn-148–Asp-149, Asp-178, Ala-186, Thr-189–Ser-194, and Gln-244 each bind NAD(+).

This sequence belongs to the NAD kinase family. The cofactor is a divalent metal cation.

It localises to the cytoplasm. It catalyses the reaction NAD(+) + ATP = ADP + NADP(+) + H(+). Its function is as follows. Involved in the regulation of the intracellular balance of NAD and NADP, and is a key enzyme in the biosynthesis of NADP. Catalyzes specifically the phosphorylation on 2'-hydroxyl of the adenosine moiety of NAD to yield NADP. This chain is NAD kinase, found in Campylobacter jejuni subsp. jejuni serotype O:2 (strain ATCC 700819 / NCTC 11168).